The sequence spans 394 residues: Protein TsgA homolog (394 aa).

Transmembrane regions (helical) follow at residues 11–31 (WISFFSYALTGALVIVTGMVM), 51–71 (FLNAGILISIFLNAWLMEIVP), 78–98 (FGFVLMVAAVAGLMVSHSIAL), 101–121 (VSMFVLGLVSGITMSIGTFLI), 134–154 (LLFTDSFFSMAGMIFPMVAAV), 162–182 (WYWVYACIGLVYVAIFVLTFG), 206–226 (IGVLFLSVAALCYILGQLGFI), 250–270 (FWMSYMFGMWAFSFILRFFDL), 273–293 (ILTVLAGLATVLMYLFINGAP), 297–317 (AWFILTLGFFSSAIYTSIITL), 332–352 (FVLTCGTIGTMLTFVVTGPIV), and 361–381 (LQTANGLYAVVFVMCLILGFV).

The protein belongs to the major facilitator superfamily. TsgA family.

The protein resides in the cell inner membrane. In Enterobacter sp. (strain 638), this protein is Protein TsgA homolog.